A 282-amino-acid chain; its full sequence is Probable endonuclease 4 (282 aa).

Zn(2+) contacts are provided by histidine 69, histidine 109, glutamate 145, aspartate 179, histidine 182, histidine 216, aspartate 229, histidine 231, and glutamate 261.

This sequence belongs to the AP endonuclease 2 family. Zn(2+) is required as a cofactor.

It carries out the reaction Endonucleolytic cleavage to 5'-phosphooligonucleotide end-products.. Its function is as follows. Endonuclease IV plays a role in DNA repair. It cleaves phosphodiester bonds at apurinic or apyrimidinic (AP) sites, generating a 3'-hydroxyl group and a 5'-terminal sugar phosphate. The polypeptide is Probable endonuclease 4 (Campylobacter hominis (strain ATCC BAA-381 / DSM 21671 / CCUG 45161 / LMG 19568 / NCTC 13146 / CH001A)).